The sequence spans 674 residues: Xaa-Pro aminopeptidase 2 (674 aa).

Positions 1-21 (MARAHWGCCPWLVLLCACAWG) are cleaved as a signal peptide. Asparagine 35, asparagine 49, and asparagine 65 each carry an N-linked (GlcNAc...) asparagine glycan. Arginine 116 is a binding site for substrate. N-linked (GlcNAc...) asparagine glycans are attached at residues asparagine 278 and asparagine 291. Histidine 430 is a binding site for substrate. Zn(2+) contacts are provided by aspartate 450, aspartate 461, and histidine 524. Histidine 524, histidine 533, and glutamate 555 together coordinate substrate. Residues glutamate 555 and glutamate 569 each coordinate Zn(2+). Alanine 649 is lipidated: GPI-anchor amidated alanine. Positions 650–674 (ARAPDTASWASVLVVSTLAILGWSV) are cleaved as a propeptide — removed in mature form.

Belongs to the peptidase M24B family. Homotrimer. Requires Zn(2+) as cofactor. N-glycosylated. As to expression, expressed in kidney, lung, heart, placenta, liver, small intestine and colon. No expression in brain, skeletal muscle, pancreas, spleen, thymus, prostate, testis and ovary.

It localises to the cell membrane. The enzyme catalyses Release of any N-terminal amino acid, including proline, that is linked to proline, even from a dipeptide or tripeptide.. Inhibited by apstatin and the chelating agent 1,10-phenanthroline. Also inhibited by high concentrations of Zn(2+). Not significantly inhibited by bestatin or phosphoramidon. Functionally, membrane-bound metalloprotease which catalyzes the removal of a penultimate prolyl residue from the N-termini of peptides, such as Arg-Pro-Pro. May play a role in the metabolism of the vasodilator bradykinin. The polypeptide is Xaa-Pro aminopeptidase 2 (XPNPEP2) (Homo sapiens (Human)).